We begin with the raw amino-acid sequence, 359 residues long: Protein RecA (359 aa).

ATP is bound at residue 74 to 81 (GPESSGKT).

Belongs to the RecA family.

It is found in the cytoplasm. Functionally, can catalyze the hydrolysis of ATP in the presence of single-stranded DNA, the ATP-dependent uptake of single-stranded DNA by duplex DNA, and the ATP-dependent hybridization of homologous single-stranded DNAs. It interacts with LexA causing its activation and leading to its autocatalytic cleavage. The sequence is that of Protein RecA from Anaplasma marginale (strain St. Maries).